Reading from the N-terminus, the 328-residue chain is Tetraacyldisaccharide 4'-kinase (328 aa).

An ATP-binding site is contributed by 55 to 62; it reads TAGGNGKT.

Belongs to the LpxK family.

It carries out the reaction a lipid A disaccharide + ATP = a lipid IVA + ADP + H(+). It functions in the pathway glycolipid biosynthesis; lipid IV(A) biosynthesis; lipid IV(A) from (3R)-3-hydroxytetradecanoyl-[acyl-carrier-protein] and UDP-N-acetyl-alpha-D-glucosamine: step 6/6. Transfers the gamma-phosphate of ATP to the 4'-position of a tetraacyldisaccharide 1-phosphate intermediate (termed DS-1-P) to form tetraacyldisaccharide 1,4'-bis-phosphate (lipid IVA). The protein is Tetraacyldisaccharide 4'-kinase of Escherichia coli (strain 55989 / EAEC).